The sequence spans 529 residues: Peptide chain release factor 3 (529 aa).

Residues 11–280 form the tr-type G domain; the sequence is AKRRTFAIIS…GLVEWAPAPM (270 aa). Residues 20 to 27, 88 to 92, and 142 to 145 each bind GTP; these read SHPDAGKT, DTPGH, and NKLD.

Belongs to the TRAFAC class translation factor GTPase superfamily. Classic translation factor GTPase family. PrfC subfamily.

The protein resides in the cytoplasm. Its function is as follows. Increases the formation of ribosomal termination complexes and stimulates activities of RF-1 and RF-2. It binds guanine nucleotides and has strong preference for UGA stop codons. It may interact directly with the ribosome. The stimulation of RF-1 and RF-2 is significantly reduced by GTP and GDP, but not by GMP. This is Peptide chain release factor 3 from Shigella sonnei (strain Ss046).